The chain runs to 155 residues: MGVQKTEAEVTSSVSAEKLFKALCLDIDTLLPQVLPGAIKSSETLEGDGGVGTVKLVHLGDASPFKTMKQKVDAIDKESFTYAYSIIDGDILLGFIESINNHFAYVPNADGGCTVKSTITFNTKGDAVVPEENIKFANDQNRAIFQAVEAYLIAN.

This sequence belongs to the BetVI family. As to quaternary structure, monomer. Expressed in roots (at protein level). Expressed in roots.

The chain is Dau c 1 isoallergen Dau c 1.0401 from Daucus carota subsp. sativus (Carrot).